We begin with the raw amino-acid sequence, 529 residues long: Phosphoenolpyruvate carboxykinase (ATP) (529 aa).

Substrate-binding residues include Arg-55, Tyr-190, and Lys-196. Residues Lys-196, His-215, and 231-239 (GLSGTGKTT) contribute to the ATP site. Residues Lys-196 and His-215 each coordinate Mn(2+). Mn(2+) is bound at residue Asp-252. Residues Glu-280, Arg-317, and Thr-442 each coordinate ATP. Arg-317 contacts substrate.

The protein belongs to the phosphoenolpyruvate carboxykinase (ATP) family. Mn(2+) serves as cofactor.

Its subcellular location is the cytoplasm. It catalyses the reaction oxaloacetate + ATP = phosphoenolpyruvate + ADP + CO2. The protein operates within carbohydrate biosynthesis; gluconeogenesis. Involved in the gluconeogenesis. Catalyzes the conversion of oxaloacetate (OAA) to phosphoenolpyruvate (PEP) through direct phosphoryl transfer between the nucleoside triphosphate and OAA. This is Phosphoenolpyruvate carboxykinase (ATP) from Deinococcus geothermalis (strain DSM 11300 / CIP 105573 / AG-3a).